Here is a 237-residue protein sequence, read N- to C-terminus: Pyridoxine 5'-phosphate synthase (237 aa).

Positions 7 and 18 each coordinate 3-amino-2-oxopropyl phosphate. The active-site Proton acceptor is the His43. Residues Arg45 and His50 each contribute to the 1-deoxy-D-xylulose 5-phosphate site. The active-site Proton acceptor is Glu70. Thr100 contributes to the 1-deoxy-D-xylulose 5-phosphate binding site. His190 functions as the Proton donor in the catalytic mechanism. 3-amino-2-oxopropyl phosphate-binding positions include Asp191 and 213-214 (GH).

The protein belongs to the PNP synthase family. Homooctamer; tetramer of dimers.

Its subcellular location is the cytoplasm. It carries out the reaction 3-amino-2-oxopropyl phosphate + 1-deoxy-D-xylulose 5-phosphate = pyridoxine 5'-phosphate + phosphate + 2 H2O + H(+). It participates in cofactor biosynthesis; pyridoxine 5'-phosphate biosynthesis; pyridoxine 5'-phosphate from D-erythrose 4-phosphate: step 5/5. Functionally, catalyzes the complicated ring closure reaction between the two acyclic compounds 1-deoxy-D-xylulose-5-phosphate (DXP) and 3-amino-2-oxopropyl phosphate (1-amino-acetone-3-phosphate or AAP) to form pyridoxine 5'-phosphate (PNP) and inorganic phosphate. The polypeptide is Pyridoxine 5'-phosphate synthase (Bacteroides fragilis (strain ATCC 25285 / DSM 2151 / CCUG 4856 / JCM 11019 / LMG 10263 / NCTC 9343 / Onslow / VPI 2553 / EN-2)).